The following is a 299-amino-acid chain: 4-hydroxy-tetrahydrodipicolinate synthase (299 aa).

Threonine 44 contributes to the pyruvate binding site. Residue tyrosine 133 is the Proton donor/acceptor of the active site. Lysine 162 functions as the Schiff-base intermediate with substrate in the catalytic mechanism. Position 204 (isoleucine 204) interacts with pyruvate.

The protein belongs to the DapA family. In terms of assembly, homotetramer; dimer of dimers.

Its subcellular location is the cytoplasm. It catalyses the reaction L-aspartate 4-semialdehyde + pyruvate = (2S,4S)-4-hydroxy-2,3,4,5-tetrahydrodipicolinate + H2O + H(+). It participates in amino-acid biosynthesis; L-lysine biosynthesis via DAP pathway; (S)-tetrahydrodipicolinate from L-aspartate: step 3/4. In terms of biological role, catalyzes the condensation of (S)-aspartate-beta-semialdehyde [(S)-ASA] and pyruvate to 4-hydroxy-tetrahydrodipicolinate (HTPA). The polypeptide is 4-hydroxy-tetrahydrodipicolinate synthase (Thermus thermophilus (strain ATCC BAA-163 / DSM 7039 / HB27)).